Reading from the N-terminus, the 414-residue chain is Protein SOSEKI 2 (414 aa).

Residues 44 to 135 (RRVQVVYYLT…YVLKGSEITD (92 aa)) form a DIX-like oligomerization domain region. The segment at 171-273 (SFDDAELYVG…GDPVEPGSGR (103 aa)) is disordered. A compositionally biased stretch (acidic residues) spans 173–192 (DDAELYVGEEEEEEDGEYEL). Over residues 205–229 (PQSRCSRGVSTETMESTEQKPNLTK) the composition is skewed to polar residues. The segment covering 230 to 242 (TEQDLQVRSDSSD) has biased composition (basic and acidic residues). The Association to cell membranes motif lies at 283 to 284 (CG).

This sequence belongs to the SOSEKI family. In terms of assembly, homodimer. Forms long polymer filaments with other SOKs proteins polymers (e.g. SOK1, SOK2, SOK3 and SOK4) crucial for polar localization and biological activity. Binds to ANGUSTIFOLIA (AN). As to expression, expressed during embryogenesis and in roots.

Its subcellular location is the cell membrane. Functionally, part of a three-gene cluster containing FLC, UFC and DFC, which is coordinately regulated in response to vernalization. Also regulated by FLX. SOSEKI proteins (SOK1-5) locally interpret global polarity cues and can influence cell division orientation to coordinate cell polarization relative to body axes, probably by guiding ANGUSTIFOLIA (AN) polarized localization. This is Protein SOSEKI 2 from Arabidopsis thaliana (Mouse-ear cress).